We begin with the raw amino-acid sequence, 927 residues long: Non-lysosomal glucosylceramidase (927 aa).

Positions 32 to 62 (EETGGTKDVQVTDCKSPEDSRPPKETDCCNP) are disordered. Residues 46–58 (KSPEDSRPPKETD) are compositionally biased toward basic and acidic residues.

Belongs to the non-lysosomal glucosylceramidase family. As to expression, widely expressed. Mainly expressed in brain, heart, skeletal muscle, kidney and placenta and expressed at lower levels in liver, spleen, small intestine and lung. Detectable in colon, thymus and peripheral blood leukocytes.

The protein resides in the endoplasmic reticulum membrane. It localises to the golgi apparatus membrane. It carries out the reaction a beta-D-glucosyl-(1&lt;-&gt;1')-N-acylsphing-4-enine + H2O = an N-acylsphing-4-enine + D-glucose. The enzyme catalyses a beta-D-galactosyl-(1&lt;-&gt;1')-N-acylsphing-4-enine + H2O = an N-acylsphing-4-enine + D-galactose. The catalysed reaction is beta-D-glucosyl-(1-&gt;3)-O-lithocholate + H2O = lithocholate + D-glucose. It catalyses the reaction beta-D-glucosyl-(1-&gt;3)-O-chenodeoxycholate + H2O = chenodeoxycholate + D-glucose. It carries out the reaction a di-trans,poly-cis-dolichyl beta-D-glucosyl phosphate + chenodeoxycholate = beta-D-glucosyl-(1-&gt;3)-O-chenodeoxycholate + a di-trans,poly-cis-dolichyl phosphate + H(+). The enzyme catalyses octyl beta-D-glucose + chenodeoxycholate = beta-D-glucosyl-(1-&gt;3)-O-chenodeoxycholate + octan-1-ol. The catalysed reaction is cholesteryl 3-beta-D-glucoside + H2O = cholesterol + D-glucose. It catalyses the reaction a beta-D-glucosyl-(1&lt;-&gt;1')-N-acylsphing-4-enine + cholesterol = cholesteryl 3-beta-D-glucoside + an N-acylsphing-4-enine. It carries out the reaction beta-D-glucosyl-N-(9Z-octadecenoyl)-sphing-4E-enine + cholesterol = N-(9Z-octadecenoyl)-sphing-4-enine + cholesteryl 3-beta-D-glucoside. The enzyme catalyses a beta-D-galactosyl-(1&lt;-&gt;1')-N-acylsphing-4-enine + cholesterol = cholesteryl 3-beta-D-galactoside + an N-acylsphing-4-enine. The catalysed reaction is 1-(beta-D-galactosyl)-N-dodecanoylsphing-4-enine + cholesterol = cholesteryl 3-beta-D-galactoside + N-dodecanoylsphing-4-enine. Its pathway is lipid metabolism; sphingolipid metabolism. The protein operates within steroid metabolism; cholesterol metabolism. Its activity is regulated as follows. Inhibited by AMP-DMN/N -((5-adamantane-1-yl-methoxy)pentyl)-deoxynojirimycin. Activated by Mn(2+), Co(2+) and Mg(2+) and inhibited by Zn(2+). Enzymatic activity is dependent on membrane association and requires the presence of lipids. The membrane-associated enzyme is not inhibited by condutiriol B epoxide and bromocondutiriol B epoxide. In terms of biological role, non-lysosomal glucosylceramidase that catalyzes the hydrolysis of glucosylceramides/GlcCers (such as beta-D-glucosyl-(1&lt;-&gt;1')-N-acylsphing-4-enine) to free glucose and ceramides (such as N-acylsphing-4-enine). GlcCers are membrane glycosphingolipids that have a wide intracellular distribution. They are the main precursors of more complex glycosphingolipids that play a role in cellular growth, differentiation, adhesion, signaling, cytoskeletal dynamics and membrane properties. Involved in the transglucosylation of cholesterol, transfers glucose from GlcCer to cholesterol, thereby modifying its water solubility and biological properties. Under specific conditions, may catalyze the reverse reaction, transferring glucose from cholesteryl-3-beta-D-glucoside to ceramide (such as N-acylsphing-4-enine). May play a role in the metabolism of bile acids. Able to hydrolyze bile acid 3-O-glucosides as well as to produce bile acid-glucose conjugates thanks to a bile acid glucosyl transferase activity. Catalyzes the hydrolysis of galactosylceramides/GalCers (such as beta-D-galactosyl-(1&lt;-&gt;1')-N-acylsphing-4-enine), as well as the galactosyl transfer between GalCers and cholesterol in vitro with lower activity compared with their activity against GlcCers. The protein is Non-lysosomal glucosylceramidase of Homo sapiens (Human).